Reading from the N-terminus, the 601-residue chain is Somatic embryogenesis receptor kinase 5 (601 aa).

The signal sequence occupies residues 1 to 24 (MEHGSSRGFIWLILFLDFVSRVTG). At 25–215 (KTQVDALIAL…SPSPSPSGTS (191 aa)) the chain is on the extracellular side. N-linked (GlcNAc...) asparagine glycans are attached at residues Asn52, Asn81, Asn105, Asn129, Asn151, and Asn184. LRR repeat units lie at residues 71-94 (SVTR…AQLP), 95-118 (NLQY…GDLM), 119-141 (ELVS…LGKL), 143-165 (KLRF…LTAL), and 166-188 (PLDV…GSFS). The chain crosses the membrane as a helical span at residues 216-236 (AAIVVGVAAGAALLFALAWWL). The Cytoplasmic segment spans residues 237–601 (RRKLQGHFLD…IENDYPSGPR (365 aa)). Residue Thr272 is modified to Phosphothreonine. Residues 275–572 (FSKRNVLGKG…KEEMPIHDFN (298 aa)) form the Protein kinase domain. 281–289 (LGKGRFGIL) serves as a coordination point for ATP. Thr298 is modified (phosphothreonine). Lys303 contacts ATP. Phosphoserine occurs at positions 356 and 359. The active-site Proton acceptor is the Asp402. Phosphothreonine is present on residues Thr435, Thr436, and Thr441. Tyr449 carries the post-translational modification Phosphotyrosine. A Phosphoserine modification is found at Ser451. Position 452 is a phosphothreonine (Thr452). 2 positions are modified to phosphoserine: Ser456 and Ser506. Thr532 is subject to Phosphothreonine.

The protein belongs to the protein kinase superfamily. Ser/Thr protein kinase family. Interacts with TMK4/BARK1. Post-translationally, autophosphorylated.

It is found in the cell membrane. It carries out the reaction L-seryl-[protein] + ATP = O-phospho-L-seryl-[protein] + ADP + H(+). It catalyses the reaction L-threonyl-[protein] + ATP = O-phospho-L-threonyl-[protein] + ADP + H(+). Its function is as follows. Serine/threonine-kinase of unknown function. The sequence is that of Somatic embryogenesis receptor kinase 5 (SERK5) from Arabidopsis thaliana (Mouse-ear cress).